A 411-amino-acid chain; its full sequence is UPF0754 membrane protein Npun_R4433 (411 aa).

The next 2 helical transmembrane spans lie at 3 to 23 (WSHLWLYVSPPVLGGIIGYFT) and 387 to 407 (IVTLGGVLGFVIGLLQTVFLV).

This sequence belongs to the UPF0754 family.

It is found in the cell inner membrane. The polypeptide is UPF0754 membrane protein Npun_R4433 (Nostoc punctiforme (strain ATCC 29133 / PCC 73102)).